We begin with the raw amino-acid sequence, 454 residues long: Death-associated protein kinase 3 (454 aa).

The 263-residue stretch at Tyr-13–Ile-275 folds into the Protein kinase domain. ATP-binding positions include Leu-19–Val-27 and Lys-42. Ser-50 bears the Phosphoserine; by autocatalysis mark. Pyridone 6 is bound by residues Glu-94 and Val-96. Residue Asp-139 is the Proton acceptor of the active site. The interval Asp-161–Gly-204 is activation segment. 2 positions are modified to phosphothreonine: Thr-180 and Thr-225. Thr-265 is modified (phosphothreonine; by autocatalysis and ROCK1). Residue Thr-299 is modified to Phosphothreonine; by autocatalysis, DAPK1 and ROCK1. Thr-306 bears the Phosphothreonine; by autocatalysis mark. Phosphoserine; by DAPK1 is present on Ser-309. Ser-311 bears the Phosphoserine; by autocatalysis and DAPK1 mark. Phosphoserine; by DAPK1 is present on residues Ser-312, Ser-318, and Ser-326. The tract at residues Val-427–Leu-441 is leucine-zipper.

This sequence belongs to the protein kinase superfamily. CAMK Ser/Thr protein kinase family. DAP kinase subfamily. In terms of assembly, homooligomer in its kinase-active form (homotrimers and homodimers are reported); monomeric in its kinase-inactive form. Homodimerization is required for activation segment autophosphorylation. Isoform 1 and isoform 2 interact with myosin and PPP1R12A; interaction of isoform 1 with PPP1R12A is inhibited by RhoA dominant negative form. Interacts with NLK, DAXX, STAT3, RHOD (GTP-bound form) and TCP10L. Interacts with PAWR; the interaction is reported conflictingly: according to PubMed:17953487 does not interact with PAWR. Interacts with ULK1; may be a substrate of ULK1. Interacts with LUZP1; the interaction is likely to occur throughout the cell cycle and reduces the LUZP1-mediated suppression of MYL9 phosphorylation. Mg(2+) is required as a cofactor. The phosphorylation status is critical for kinase activity, oligomerization and intracellular localization. Phosphorylation at Thr-180, Thr-225 and Thr-265 is essential for activity. The phosphorylated form is localized in the cytoplasm promoted by phosphorylation at Thr-299; nuclear translocation or retention is maximal when it is not phosphorylated. Phosphorylation increases the trimeric form, and its dephosphorylation favors a kinase-inactive monomeric form. Both isoform 1 and isoform 2 can undergo autophosphorylation. In terms of tissue distribution, widely expressed. Isoform 1 and isoform 2 are expressed in the bladder smooth muscle.

The protein localises to the nucleus. It localises to the PML body. The protein resides in the cytoplasm. Its subcellular location is the cytoskeleton. It is found in the microtubule organizing center. The protein localises to the centrosome. It localises to the chromosome. The protein resides in the centromere. Its subcellular location is the spindle. It is found in the midbody. It carries out the reaction L-seryl-[protein] + ATP = O-phospho-L-seryl-[protein] + ADP + H(+). The catalysed reaction is L-threonyl-[protein] + ATP = O-phospho-L-threonyl-[protein] + ADP + H(+). With respect to regulation, a sequential activation is proposed: autophosphorylation at consensus sites is leading to dimerization of the catalytic domain stabilized by phosphorylation at Ser-50 and activation segment exchange (producing an active confirmation of both kinase modules in trans) followed by phosphorylation at Thr-180 in the activation segment and at other regulatory sites. Phosphorylation at Thr-180, Thr-225 and Thr-265 is essential for activity. Oligomerization is required for full enzymatic activity. Inhibited by pyridone-6 (K00225), a potent, ATP-competitive inhibitor. Serine/threonine kinase which is involved in the regulation of apoptosis, autophagy, transcription, translation and actin cytoskeleton reorganization. Involved in the regulation of smooth muscle contraction. Regulates both type I (caspase-dependent) apoptotic and type II (caspase-independent) autophagic cell deaths signal, depending on the cellular setting. Involved in regulation of starvation-induced autophagy. Regulates myosin phosphorylation in both smooth muscle and non-muscle cells. In smooth muscle, regulates myosin either directly by phosphorylating MYL12B and MYL9 or through inhibition of smooth muscle myosin phosphatase (SMPP1M) via phosphorylation of PPP1R12A; the inhibition of SMPP1M functions to enhance muscle responsiveness to Ca(2+) and promote a contractile state. Phosphorylates MYL12B in non-muscle cells leading to reorganization of actin cytoskeleton. Isoform 2 can phosphorylate myosin, PPP1R12A and MYL12B. Overexpression leads to condensation of actin stress fibers into thick bundles. Involved in actin filament focal adhesion dynamics. The function in both reorganization of actin cytoskeleton and focal adhesion dissolution is modulated by RhoD. Positively regulates canonical Wnt/beta-catenin signaling through interaction with NLK and TCF7L2. Phosphorylates RPL13A on 'Ser-77' upon interferon-gamma activation which is causing RPL13A release from the ribosome, RPL13A association with the GAIT complex and its subsequent involvement in transcript-selective translation inhibition. Enhances transcription from AR-responsive promoters in a hormone- and kinase-dependent manner. Involved in regulation of cell cycle progression and cell proliferation. May be a tumor suppressor. The sequence is that of Death-associated protein kinase 3 (DAPK3) from Homo sapiens (Human).